The chain runs to 390 residues: 2-oxoisovalerate dehydrogenase subunit beta, mitochondrial (390 aa).

The transit peptide at 1–48 (MAAVAARAGGLLWLRAAGAERRRCGLRCAALVQGFLQPGGEDTAQKRR) directs the protein to the mitochondrion. Tyr-150 lines the thiamine diphosphate pocket. K(+)-binding residues include Gly-176, Leu-178, Thr-179, Cys-226, and Asp-229. Lys-230 is modified (N6-acetyllysine). Asn-231 is a binding site for K(+). Lys-239 carries the N6-acetyllysine modification.

As to quaternary structure, heterotetramer of 2 alpha/BCKDHA and 2 beta chains/BCKDHB that forms the branched-chain alpha-keto acid decarboxylase (E1) component of the BCKD complex. The branched-chain alpha-ketoacid dehydrogenase is a large complex composed of three major building blocks E1, E2 and E3. It is organized around E2, a 24-meric cubic core composed of DBT, to which are associated 6 to 12 copies of E1, and approximately 6 copies of the dehydrogenase E3, a DLD dimer. It depends on thiamine diphosphate as a cofactor.

The protein localises to the mitochondrion matrix. The catalysed reaction is N(6)-[(R)-lipoyl]-L-lysyl-[protein] + 3-methyl-2-oxobutanoate + H(+) = N(6)-[(R)-S(8)-2-methylpropanoyldihydrolipoyl]-L-lysyl-[protein] + CO2. Its function is as follows. Together with BCKDHA forms the heterotetrameric E1 subunit of the mitochondrial branched-chain alpha-ketoacid dehydrogenase (BCKD) complex. The BCKD complex catalyzes the multi-step oxidative decarboxylation of alpha-ketoacids derived from the branched-chain amino-acids valine, leucine and isoleucine producing CO2 and acyl-CoA which is subsequently utilized to produce energy. The E1 subunit catalyzes the first step with the decarboxylation of the alpha-ketoacid forming an enzyme-product intermediate. A reductive acylation mediated by the lipoylamide cofactor of E2 extracts the acyl group from the E1 active site for the next step of the reaction. This chain is 2-oxoisovalerate dehydrogenase subunit beta, mitochondrial, found in Mus musculus (Mouse).